The sequence spans 3330 residues: Laminin subunit alpha-3 (3330 aa).

A signal peptide spans 1 to 31 (MAVALGRAPRSLPLLLTLLLLLLLRMSPSWS). Positions 40–295 (SSRSLHPPYF…SIKDISVGGR (256 aa)) constitute a Laminin N-terminal domain. The N-linked (GlcNAc...) asparagine glycan is linked to Asn-139. Residues 295–725 (RCVCNGHAEA…NNYYFPDLHH (431 aa)) are domain V. 27 cysteine pairs are disulfide-bonded: Cys-296–Cys-305, Cys-298–Cys-316, Cys-318–Cys-327, Cys-330–Cys-350, Cys-353–Cys-362, Cys-355–Cys-387, Cys-390–Cys-399, Cys-402–Cys-420, Cys-423–Cys-433, Cys-425–Cys-440, Cys-442–Cys-451, Cys-454–Cys-464, Cys-488–Cys-500, Cys-490–Cys-506, Cys-508–Cys-517, Cys-520–Cys-530, Cys-533–Cys-545, Cys-535–Cys-552, Cys-554–Cys-563, Cys-566–Cys-583, Cys-628–Cys-642, Cys-630–Cys-649, Cys-651–Cys-660, Cys-663–Cys-678, Cys-681–Cys-693, Cys-683–Cys-700, and Cys-702–Cys-711. Laminin EGF-like domains are found at residues 296–350 (CVCN…HNEC), 353–420 (CNCH…LHGC), 423–464 (CSCD…FPFC), 488–530 (CDCN…FPIC), 533–576 (CQCS…FPYC), 582–625 (VCHP…PRGC), 628–678 (CQCH…YFGC), and 681–725 (CQCD…DLHH). A glycan (N-linked (GlcNAc...) asparagine) is linked at Asn-445. A domain IV 1 (domain IV B) region spans residues 793–1262 (TEAISGRITL…VAFYHNGAIP (470 aa)). The domain III B stretch occupies residues 1263-1462 (CECDPAGTAG…CFCFGVNTDC (200 aa)). Disulfide bonds link Cys-1309/Cys-1316, Cys-1311/Cys-1323, Cys-1325/Cys-1334, Cys-1337/Cys-1350, Cys-1353/Cys-1368, Cys-1355/Cys-1375, Cys-1377/Cys-1386, Cys-1389/Cys-1399, Cys-1402/Cys-1414, Cys-1404/Cys-1421, Cys-1423/Cys-1432, and Cys-1435/Cys-1450. Laminin EGF-like domains follow at residues 1309–1352 (CNCG…GCDV), 1353–1401 (CNCS…ECVP), and 1402–1452 (CSCN…GCTK). The N-linked (GlcNAc...) asparagine glycan is linked to Asn-1354. The Laminin EGF-like 12; first part domain maps to 1453–1462 (CFCFGVNTDC). A Laminin IV type A domain is found at 1466–1650 (HKQRAKFVDM…SGPRAHLVEM (185 aa)). Residues 1651-1683 (CACPPDYTGDSCQGCRPGYYWDNKSLPVGRCVP) form the Laminin EGF-like 12; second part domain. Residues 1651 to 1818 (CACPPDYTGD…DGSPAEECDD (168 aa)) form a domain III A region. Asn-1673 carries N-linked (GlcNAc...) asparagine glycosylation. Disulfide bonds link Cys-1684/Cys-1693, Cys-1686/Cys-1700, Cys-1703/Cys-1712, Cys-1715/Cys-1728, Cys-1731/Cys-1743, Cys-1733/Cys-1752, Cys-1754/Cys-1763, and Cys-1766/Cys-1781. 2 Laminin EGF-like domains span residues 1684–1730 (CNCN…SCRV) and 1731–1783 (CPCP…SCQP). Residues 1784–1818 (CNCNSNGQLGPCDPLTGDCVNQEPKDGSPAEECDD) enclose the Laminin EGF-like 15; truncated domain. The interval 1819 to 2385 (CDSCVMTLLN…ARDAANKVAI (567 aa)) is domain II and I. Coiled coils occupy residues 1851–1980 (TGAL…LRSR), 2012–2057 (VENN…HENE), 2088–2165 (LLQT…GDEL), and 2211–2238 (KRAK…QQVS). An N-linked (GlcNAc...) asparagine glycan is attached at Asn-2159. Residue Asn-2261 is glycosylated (N-linked (GlcNAc...) asparagine). Residues 2274-2276 (RGD) carry the Cell attachment site motif. Residues 2318–2383 (SARREDFSKA…QQARDAANKV (66 aa)) adopt a coiled-coil conformation. N-linked (GlcNAc...) asparagine glycans are attached at residues Asn-2332, Asn-2361, Asn-2498, Asn-2580, and Asn-2747. Laminin G-like domains are found at residues 2386–2587 (PMRF…VEPC), 2594–2756 (SDKN…TKKC), 2763–2923 (VRTA…LGGC), 2983–3147 (ALQF…VSPC), and 3154–3327 (KGIY…LNGC). 3 cysteine pairs are disulfide-bonded: Cys-2557–Cys-2587, Cys-2733–Cys-2756, and Cys-2891–Cys-2923. The N-linked (GlcNAc...) asparagine glycan is linked to Asn-3094. Cys-3124 and Cys-3147 are disulfide-bonded. A glycan (N-linked (GlcNAc...) asparagine) is linked at Asn-3270. Cys-3299 and Cys-3327 are disulfide-bonded.

As to quaternary structure, laminin is a complex glycoprotein, consisting of three different polypeptide chains (alpha, beta, gamma), which are bound to each other by disulfide bonds into a cross-shaped molecule comprising one long and three short arms with globules at each end. Alpha-3 is a subunit of laminin-5 (laminin-332 or epiligrin/kalinin/nicein), laminin-6 (laminin-311 or K-laminin) and laminin-7 (laminin-321 or KS-laminin). Basal membrane of the upper alimentary tract and urinary and nasal epithelia, salivary glands and teeth (both variants). Isoform A is predominantly expressed in skin, hair follicles and developing neurons of the trigeminal ganglion. Isoform B was found in bronchi, alveoli, stomach, intestinal crypts, whisker pads, CNS, telencephalic neuroectoderm, thalamus, Rathke pouch and periventricular subependymal germinal layer.

It is found in the secreted. The protein localises to the extracellular space. The protein resides in the extracellular matrix. Its subcellular location is the basement membrane. Binding to cells via a high affinity receptor, laminin is thought to mediate the attachment, migration and organization of cells into tissues during embryonic development by interacting with other extracellular matrix components. In terms of biological role, laminin-5 is thought to be involved in (1) cell adhesion via integrin alpha-3/beta-1 in focal adhesion and integrin alpha-6/beta-4 in hemidesmosomes, (2) signal transduction via tyrosine phosphorylation of pp125-FAK and p80, (3) differentiation of keratinocytes. The polypeptide is Laminin subunit alpha-3 (Lama3) (Mus musculus (Mouse)).